A 906-amino-acid polypeptide reads, in one-letter code: Protein translocase subunit SecA (906 aa).

Residues glutamine 90, 108-112, and aspartate 503 contribute to the ATP site; that span reads GEGKT. The disordered stretch occupies residues 845 to 882; that stretch reads TAAEAPASVPQPQAAVAPQPAPELVGADNGESQPQAWG. The segment covering 846–862 has biased composition (low complexity); it reads AAEAPASVPQPQAAVAP. Residues cysteine 890, cysteine 892, cysteine 901, and histidine 902 each coordinate Zn(2+).

This sequence belongs to the SecA family. Monomer and homodimer. Part of the essential Sec protein translocation apparatus which comprises SecA, SecYEG and auxiliary proteins SecDF-YajC and YidC. Zn(2+) serves as cofactor.

The protein resides in the cell inner membrane. Its subcellular location is the cytoplasm. The catalysed reaction is ATP + H2O + cellular proteinSide 1 = ADP + phosphate + cellular proteinSide 2.. Its function is as follows. Part of the Sec protein translocase complex. Interacts with the SecYEG preprotein conducting channel. Has a central role in coupling the hydrolysis of ATP to the transfer of proteins into and across the cell membrane, serving both as a receptor for the preprotein-SecB complex and as an ATP-driven molecular motor driving the stepwise translocation of polypeptide chains across the membrane. The chain is Protein translocase subunit SecA from Cereibacter sphaeroides (strain ATCC 17025 / ATH 2.4.3) (Rhodobacter sphaeroides).